The chain runs to 366 residues: MSGNTFGTLFTVTSFGESHGPAIGCVVDGCPPGLALCEADIQAELDRRKPGTSRHVTQRREPDTVEILSGVFEGKTTGTPIGLLIRNQDQRSKDYGNIADTFRPGHADYAYTQKYGFRDYRGGGRSSARETAVRVAAGAIARKWLHERFGVAIRGWMSALGPIEIPFVSADAIDGNAFFAPNSAIVPELEAYMDKLRKSLDSVGAKITVTATGVPPGWGEPVYDRLDAEIAYAMMGINAVKGVEIGAGFDSVAQKGSEHGDEMTPQGFATNHAGGVLGGISTGQEIVVNMAIKPTSSIAQSRRSINRQGEAIEVATEGRHDPCVGIRATPIAEAMLALVLMDHALRHRAQCGDVLCATPRIPGKIA.

The NADP(+) site is built by Arg48 and Arg54. Residues 125 to 127 (RSS), 238 to 239 (NA), Gly278, 293 to 297 (KPTSS), and Arg319 each bind FMN.

It belongs to the chorismate synthase family. As to quaternary structure, homotetramer. The cofactor is FMNH2.

The catalysed reaction is 5-O-(1-carboxyvinyl)-3-phosphoshikimate = chorismate + phosphate. Its pathway is metabolic intermediate biosynthesis; chorismate biosynthesis; chorismate from D-erythrose 4-phosphate and phosphoenolpyruvate: step 7/7. Catalyzes the anti-1,4-elimination of the C-3 phosphate and the C-6 proR hydrogen from 5-enolpyruvylshikimate-3-phosphate (EPSP) to yield chorismate, which is the branch point compound that serves as the starting substrate for the three terminal pathways of aromatic amino acid biosynthesis. This reaction introduces a second double bond into the aromatic ring system. The chain is Chorismate synthase from Dechloromonas aromatica (strain RCB).